We begin with the raw amino-acid sequence, 312 residues long: MKVAVLGAAGGIGQALALLLKTQLPSGSELSLYDIAPVTPGVAVDLSHIPTAVKIKGFSGEDATSALEGADVVLISAGVARKPGMDRSDLFNVNAGIVKNLVQQVAKTCPKACIGIITNPVNTTVAIAAEVLKKAGVYDKNKLFGVTTLDIIRSNTFVAELKGKQPGEVEVPVIGGHSGVTILPLLSQVPGVSFTEQEVADLTKRIQNAGTEVVEAKAGGGSATLSMGQAAARFGLSLVRALQGEQGVVECAYVEGDGQYARFFSQPLLLGKNGVEERKSIGTLSAFEQNALEGMLDTLKKDIALGEEFVNK.

Residues 7–13 and aspartate 34 each bind NAD(+); that span reads GAAGGIG. Substrate is bound by residues arginine 81 and arginine 87. NAD(+) contacts are provided by residues asparagine 94 and 117 to 119; that span reads ITN. Residues asparagine 119 and arginine 153 each contribute to the substrate site. The active-site Proton acceptor is histidine 177. NAD(+) is bound at residue methionine 227.

This sequence belongs to the LDH/MDH superfamily. MDH type 1 family. Homodimer.

The catalysed reaction is (S)-malate + NAD(+) = oxaloacetate + NADH + H(+). Its function is as follows. Catalyzes the reversible oxidation of malate to oxaloacetate. This is Malate dehydrogenase from Escherichia coli (strain ATCC 8739 / DSM 1576 / NBRC 3972 / NCIMB 8545 / WDCM 00012 / Crooks).